The following is a 114-amino-acid chain: Type 4 adapter protein IcmS (114 aa).

In terms of assembly, the T4BSS is a complex nanomachine composed of several subcomplexes. This subunit is part of the Type IV Coupling Complex (T4CC), a subcomplex composed of the DotLMNYZ core and the IcmSW-LvgA adapter subunits, linked by the C-terminal tail of DotL. Interacts with IcmW. IcmS and IcmW form a stable complex. Interacts directly with the type 4 coupling protein DotL. Interacts with LvgA. Interacts with effector proteins.

It is found in the cytoplasm. Its activity is regulated as follows. Interaction with DotL is critical for the export of IcmSW-dependent substrates. In terms of biological role, component of the Dot/Icm type IVB secretion system (T4BSS), which is used to inject bacterial effector proteins into eukaryotic host cells. Part of a subcomplex which recruits effector proteins and delivers them to the core transmembrane subcomplex. The IcmS/IcmW protein complex plays an important role in protein translocation by interacting with multiple Dot/Icm effector proteins to facilitate their translocation into host cells. Interaction promotes conformational changes in the effector protein, which may facilitate display of a C-terminal translocation signal. May maintain the substrates in a translocation competent form. Required for intracellular growth in host cells, replicative phagosome formation and phagosome trafficking. IcmS is required for IcmW stability. The chain is Type 4 adapter protein IcmS from Legionella pneumophila subsp. pneumophila (strain Philadelphia 1 / ATCC 33152 / DSM 7513).